Reading from the N-terminus, the 372-residue chain is 4-hydroxy-3-methylbut-2-en-1-yl diphosphate synthase (flavodoxin) (372 aa).

[4Fe-4S] cluster-binding residues include cysteine 270, cysteine 273, cysteine 305, and glutamate 312.

This sequence belongs to the IspG family. The cofactor is [4Fe-4S] cluster.

It catalyses the reaction (2E)-4-hydroxy-3-methylbut-2-enyl diphosphate + oxidized [flavodoxin] + H2O + 2 H(+) = 2-C-methyl-D-erythritol 2,4-cyclic diphosphate + reduced [flavodoxin]. Its pathway is isoprenoid biosynthesis; isopentenyl diphosphate biosynthesis via DXP pathway; isopentenyl diphosphate from 1-deoxy-D-xylulose 5-phosphate: step 5/6. Functionally, converts 2C-methyl-D-erythritol 2,4-cyclodiphosphate (ME-2,4cPP) into 1-hydroxy-2-methyl-2-(E)-butenyl 4-diphosphate. The chain is 4-hydroxy-3-methylbut-2-en-1-yl diphosphate synthase (flavodoxin) from Idiomarina loihiensis (strain ATCC BAA-735 / DSM 15497 / L2-TR).